Here is a 175-residue protein sequence, read N- to C-terminus: Arginine repressor (175 aa).

The interval 1–23 (MSVSTPERGGAEQGKGPAIARTR) is disordered.

It belongs to the ArgR family.

Its subcellular location is the cytoplasm. It functions in the pathway amino-acid biosynthesis; L-arginine biosynthesis [regulation]. Its function is as follows. Regulates arginine biosynthesis genes. This Nocardia farcinica (strain IFM 10152) protein is Arginine repressor.